A 206-amino-acid polypeptide reads, in one-letter code: Ribosomal RNA large subunit methyltransferase E (206 aa).

Positions 60, 62, 80, 96, and 121 each coordinate S-adenosyl-L-methionine. Catalysis depends on Lys161, which acts as the Proton acceptor.

It belongs to the class I-like SAM-binding methyltransferase superfamily. RNA methyltransferase RlmE family.

It is found in the cytoplasm. It catalyses the reaction uridine(2552) in 23S rRNA + S-adenosyl-L-methionine = 2'-O-methyluridine(2552) in 23S rRNA + S-adenosyl-L-homocysteine + H(+). Functionally, specifically methylates the uridine in position 2552 of 23S rRNA at the 2'-O position of the ribose in the fully assembled 50S ribosomal subunit. This chain is Ribosomal RNA large subunit methyltransferase E, found in Saccharophagus degradans (strain 2-40 / ATCC 43961 / DSM 17024).